Reading from the N-terminus, the 189-residue chain is Peptidyl-tRNA hydrolase (189 aa).

Tyr-14 is a binding site for tRNA. His-19 functions as the Proton acceptor in the catalytic mechanism. The tRNA site is built by Phe-64, Asn-66, and Asn-112.

This sequence belongs to the PTH family. In terms of assembly, monomer.

The protein localises to the cytoplasm. It catalyses the reaction an N-acyl-L-alpha-aminoacyl-tRNA + H2O = an N-acyl-L-amino acid + a tRNA + H(+). Functionally, hydrolyzes ribosome-free peptidyl-tRNAs (with 1 or more amino acids incorporated), which drop off the ribosome during protein synthesis, or as a result of ribosome stalling. Its function is as follows. Catalyzes the release of premature peptidyl moieties from peptidyl-tRNA molecules trapped in stalled 50S ribosomal subunits, and thus maintains levels of free tRNAs and 50S ribosomes. The protein is Peptidyl-tRNA hydrolase of Sphingopyxis alaskensis (strain DSM 13593 / LMG 18877 / RB2256) (Sphingomonas alaskensis).